A 614-amino-acid chain; its full sequence is MECDAVIYNITENVQQVEEALWAVSALNEEISHFEKRKVFILLSTVMTWARSKPLDPDDNEVPFTEEDYRRRKHHPNFLDHINAEKIVLKFGKNAKKFATYVVASGLQYGAEGGILHTFFKMAWLGEVPALPVFGDGTNCIPAIHVVDLAGVIQNIIDHVPKLHYLVAVDEAVHTLEDLVKCISKNTGPGKIQKVPKENAFLTKDLTQEYLDHLLVNLRMEALFVKENFNIRWVAQTGFVENINSILKEYKQSRGLLPIKICILGPPAVGKSSISEELAKYYKLHHIKMKDVIAEAIAKLEAIVAPKDSVEGEEEGEEEEEEENVDDAQELLDGIKESMEQNAGRLEDQYIIRFVKEKLKSMPCRNQGFILDGFPKTYDQAKDLFNQEEEEEEEEIRGKIFPYDKLITPEFVCGLDASDEFLKERVMNLPESVVAGTHYSQDRFLRSLSHYRDINTDDETVFNYFDELEIHPIHIDVGKLEDAQNRLAIKQLIKEIGKPRNYGLTDEEKAEEEKKAAEERLAKEAAQTAELEHKEAMEMAEKIARWEEWNKRLEEVKREERELLEVQSVPLRNYLMTYVMPTLMQGLNECCKVRPEDPVDFLAEYLFKNNPEMQ.

The tract at residues 258–503 (PIKICILGPP…KEIGKPRNYG (246 aa)) is adenylate kinase. Residue 268–273 (AVGKSS) participates in ATP binding. Residues 288 to 346 (KMKDVIAEAIAKLEAIVAPKDSVEGEEEGEEEEEEENVDDAQELLDGIKESMEQNAGRL) are NMP. The tract at residues 308 to 327 (DSVEGEEEGEEEEEEENVDD) is disordered. Positions 311-327 (EGEEEGEEEEEEENVDD) are enriched in acidic residues. AMP is bound by residues 323–346 (ENVDDAQELLDGIKESMEQNAGRL), 373–376 (GFPK), and Q380. A coiled-coil region spans residues 376 to 568 (KTYDQAKDLF…EERELLEVQS (193 aa)). The segment at 428–438 (NLPESVVAGTH) is LID. R446 contributes to the AMP binding site. G478 lines the ATP pocket. The DPY-30 stretch occupies residues 570–614 (PLRNYLMTYVMPTLMQGLNECCKVRPEDPVDFLAEYLFKNNPEMQ).

It in the central section; belongs to the adenylate kinase family. This sequence in the C-terminal section; belongs to the dpy-30 family.

Its subcellular location is the cytoplasm. It is found in the cytosol. It localises to the cell projection. The protein localises to the cilium. The protein resides in the flagellum. It catalyses the reaction AMP + ATP = 2 ADP. The catalysed reaction is a 2'-deoxyribonucleoside 5'-diphosphate + ATP = a 2'-deoxyribonucleoside 5'-triphosphate + ADP. It carries out the reaction a ribonucleoside 5'-diphosphate + ATP = a ribonucleoside 5'-triphosphate + ADP. Nucleoside monophosphate (NMP) kinase that catalyzes the reversible transfer of the terminal phosphate group between nucleoside triphosphates and monophosphates. Has highest activity toward AMP, and weaker activity toward dAMP, CMP and dCMP. Also displays broad nucleoside diphosphate kinase activity. Involved in maintaining ciliary structure and function. This Mus musculus (Mouse) protein is Adenylate kinase 7 (Ak7).